A 915-amino-acid polypeptide reads, in one-letter code: Isoleucine--tRNA ligase (915 aa).

The 'HIGH' region motif lies at 64–74 (PYANGNFHVGH). Position 557 (Glu-557) interacts with L-isoleucyl-5'-AMP. The short motif at 598-602 (AMSKS) is the 'KMSKS' region element. Lys-601 is an ATP binding site. Zn(2+) contacts are provided by Cys-887, Cys-890, Cys-902, and Cys-905.

The protein belongs to the class-I aminoacyl-tRNA synthetase family. IleS type 1 subfamily. As to quaternary structure, monomer. The cofactor is Zn(2+).

The protein localises to the cytoplasm. The enzyme catalyses tRNA(Ile) + L-isoleucine + ATP = L-isoleucyl-tRNA(Ile) + AMP + diphosphate. Functionally, catalyzes the attachment of isoleucine to tRNA(Ile). As IleRS can inadvertently accommodate and process structurally similar amino acids such as valine, to avoid such errors it has two additional distinct tRNA(Ile)-dependent editing activities. One activity is designated as 'pretransfer' editing and involves the hydrolysis of activated Val-AMP. The other activity is designated 'posttransfer' editing and involves deacylation of mischarged Val-tRNA(Ile). This Leptospira biflexa serovar Patoc (strain Patoc 1 / ATCC 23582 / Paris) protein is Isoleucine--tRNA ligase.